Consider the following 299-residue polypeptide: Junctional adhesion molecule A (299 aa).

An N-terminal signal peptide occupies residues 1-27; it reads MGTKAQVERKLLCLFILAILLCSLALG. 2 Ig-like V-type domains span residues 28–125 and 135–228; these read SVTV…VKVK and PTVN…NAVR. Residues 28-238 lie on the Extracellular side of the membrane; it reads SVTVHSSEPE…MEAVERNVGV (211 aa). 2 disulfide bridges follow: cysteine 50–cysteine 109 and cysteine 153–cysteine 212. Asparagine 185 carries N-linked (GlcNAc...) asparagine glycosylation. Residues 239 to 259 traverse the membrane as a helical segment; it reads IVAAVLVTLILLGILVFGIWF. Residues 260 to 299 lie on the Cytoplasmic side of the membrane; it reads AYSRGHFDRTKKGTSSKKVIYSQPSARSEGEFKQTSSFLV. 3 positions are modified to phosphoserine: serine 281, serine 284, and serine 287.

It belongs to the immunoglobulin superfamily. Interacts with the ninth PDZ domain of MPDZ. Interacts with the first PDZ domain of PARD3. The association between PARD3 and PARD6B probably disrupts this interaction. Interacts with ITGAL (via I-domain). Interacts with CD151. In terms of assembly, (Microbial infection) Interacts with Mammalian reovirus sigma-1 capsid protein. As to quaternary structure, (Microbial infection) Interacts with Human Rotavirus strain Wa vp4 capsid protein. Post-translationally, N-glycosylated. In terms of processing, (Microbial infection) Cleaved by H.pylori virulence factor PqqE. Cleavage leads to altered tight junction functions. In terms of tissue distribution, expressed in endothelium, epithelium and leukocytes (at protein level).

Its subcellular location is the cell junction. The protein resides in the tight junction. It is found in the cell membrane. In terms of biological role, seems to play a role in epithelial tight junction formation. Appears early in primordial forms of cell junctions and recruits PARD3. The association of the PARD6-PARD3 complex may prevent the interaction of PARD3 with JAM1, thereby preventing tight junction assembly. Plays a role in regulating monocyte transmigration involved in integrity of epithelial barrier. Ligand for integrin alpha-L/beta-2 involved in memory T-cell and neutrophil transmigration. Involved in platelet activation. Its function is as follows. (Microbial infection) Acts as a receptor for Mammalian reovirus sigma-1. Functionally, (Microbial infection) Acts as a receptor for Human Rotavirus strain Wa. The polypeptide is Junctional adhesion molecule A (F11R) (Homo sapiens (Human)).